Consider the following 421-residue polypeptide: Probable UDP-arabinose 4-epimerase 1 (421 aa).

The Cytoplasmic portion of the chain corresponds to 1 to 33; that stretch reads MLPTNRNRPQQRPARSWYFISDMDFSDPKRKPR. Residues 34–53 form a helical; Signal-anchor for type II membrane protein membrane-spanning segment; sequence YLSKILMVALLTAMCVVMLT. Residues 54 to 421 lie on the Lumenal side of the membrane; it reads QPPCHRRTPS…GYGPPQAMVL (368 aa). Position 74–105 (74–105) interacts with NAD(+); that stretch reads HVLVTGGAGYIGSHAALRLLKDSFRVTIVDNL. The active-site Proton acceptor is Tyr-222.

It belongs to the NAD(P)-dependent epimerase/dehydratase family. NAD(+) serves as cofactor.

The protein resides in the golgi apparatus. The protein localises to the golgi stack membrane. It catalyses the reaction UDP-beta-L-arabinopyranose = UDP-alpha-D-xylose. Its pathway is nucleotide-sugar biosynthesis; UDP-L-arabinose biosynthesis; UDP-L-arabinose from UDP-alpha-D-xylose: step 1/1. The protein operates within cell wall biogenesis; cell wall polysaccharide biosynthesis. The protein is Probable UDP-arabinose 4-epimerase 1 (UEL-1) of Oryza sativa subsp. japonica (Rice).